A 133-amino-acid polypeptide reads, in one-letter code: Small ribosomal subunit protein uS9 (133 aa).

Basic and acidic residues predominate over residues 97–113; it reads SKQELKSHGFLTRDPRK. The disordered stretch occupies residues 97 to 133; that stretch reads SKQELKSHGFLTRDPRKKERKKYGHKKARKSFQFSKR. Residues 114 to 133 are compositionally biased toward basic residues; the sequence is KERKKYGHKKARKSFQFSKR.

The protein belongs to the universal ribosomal protein uS9 family.

The sequence is that of Small ribosomal subunit protein uS9 from Chlamydia abortus (strain DSM 27085 / S26/3) (Chlamydophila abortus).